We begin with the raw amino-acid sequence, 501 residues long: uncharacterized protein (501 aa).

Residues 14 to 237 (EKFGFDRQKT…GFSKKRDNVN (224 aa)) form the BAR domain. The residue at position 285 (T285) is a Phosphothreonine. Disordered regions lie at residues 302-321 (IASS…DVSD) and 329-414 (SAVD…RSYS). Over residues 309–320 (QHTEDNYNKDVS) the composition is skewed to basic and acidic residues. The segment covering 390–402 (SQCNVSPSPSNIS) has biased composition (polar residues). Position 414 is a phosphoserine (S414). Positions 421–487 (SSRKVVRMKY…PSNYCVPAHP (67 aa)) constitute an SH3 domain.

The protein resides in the cytoplasm. This is an uncharacterized protein from Schizosaccharomyces pombe (strain 972 / ATCC 24843) (Fission yeast).